We begin with the raw amino-acid sequence, 314 residues long: 4-hydroxy-3-methylbut-2-enyl diphosphate reductase (314 aa).

Cys12 serves as a coordination point for [4Fe-4S] cluster. (2E)-4-hydroxy-3-methylbut-2-enyl diphosphate-binding residues include His41 and His74. Residues His41 and His74 each contribute to the dimethylallyl diphosphate site. His41 and His74 together coordinate isopentenyl diphosphate. Residue Cys96 participates in [4Fe-4S] cluster binding. Residue His124 coordinates (2E)-4-hydroxy-3-methylbut-2-enyl diphosphate. His124 provides a ligand contact to dimethylallyl diphosphate. His124 contributes to the isopentenyl diphosphate binding site. The active-site Proton donor is Glu126. Thr168 lines the (2E)-4-hydroxy-3-methylbut-2-enyl diphosphate pocket. Position 198 (Cys198) interacts with [4Fe-4S] cluster. Positions 226, 227, 228, and 270 each coordinate (2E)-4-hydroxy-3-methylbut-2-enyl diphosphate. 4 residues coordinate dimethylallyl diphosphate: Ser226, Ser227, Asn228, and Ser270. Residues Ser226, Ser227, Asn228, and Ser270 each coordinate isopentenyl diphosphate.

It belongs to the IspH family. [4Fe-4S] cluster is required as a cofactor.

It catalyses the reaction isopentenyl diphosphate + 2 oxidized [2Fe-2S]-[ferredoxin] + H2O = (2E)-4-hydroxy-3-methylbut-2-enyl diphosphate + 2 reduced [2Fe-2S]-[ferredoxin] + 2 H(+). The catalysed reaction is dimethylallyl diphosphate + 2 oxidized [2Fe-2S]-[ferredoxin] + H2O = (2E)-4-hydroxy-3-methylbut-2-enyl diphosphate + 2 reduced [2Fe-2S]-[ferredoxin] + 2 H(+). Its pathway is isoprenoid biosynthesis; dimethylallyl diphosphate biosynthesis; dimethylallyl diphosphate from (2E)-4-hydroxy-3-methylbutenyl diphosphate: step 1/1. It functions in the pathway isoprenoid biosynthesis; isopentenyl diphosphate biosynthesis via DXP pathway; isopentenyl diphosphate from 1-deoxy-D-xylulose 5-phosphate: step 6/6. Its function is as follows. Catalyzes the conversion of 1-hydroxy-2-methyl-2-(E)-butenyl 4-diphosphate (HMBPP) into a mixture of isopentenyl diphosphate (IPP) and dimethylallyl diphosphate (DMAPP). Acts in the terminal step of the DOXP/MEP pathway for isoprenoid precursor biosynthesis. This is 4-hydroxy-3-methylbut-2-enyl diphosphate reductase from Ectopseudomonas mendocina (strain ymp) (Pseudomonas mendocina).